We begin with the raw amino-acid sequence, 115 residues long: Large ribosomal subunit protein bL20 (115 aa).

It belongs to the bacterial ribosomal protein bL20 family.

Functionally, binds directly to 23S ribosomal RNA and is necessary for the in vitro assembly process of the 50S ribosomal subunit. It is not involved in the protein synthesizing functions of that subunit. The protein is Large ribosomal subunit protein bL20 of Malacoplasma penetrans (strain HF-2) (Mycoplasma penetrans).